The chain runs to 174 residues: Glutamyl-tRNA(Gln) amidotransferase subunit F, mitochondrial (174 aa).

Belongs to the GatF family. In terms of assembly, subunit of the heterotrimeric GatFAB amidotransferase (AdT) complex, composed of A, B and F subunits.

It is found in the mitochondrion inner membrane. The catalysed reaction is L-glutamyl-tRNA(Gln) + L-glutamine + ATP + H2O = L-glutaminyl-tRNA(Gln) + L-glutamate + ADP + phosphate + H(+). Allows the formation of correctly charged Gln-tRNA(Gln) through the transamidation of misacylated Glu-tRNA(Gln) in the mitochondria. The reaction takes place in the presence of glutamine and ATP through an activated gamma-phospho-Glu-tRNA(Gln). Required for proper protein synthesis within the mitochondrion. The chain is Glutamyl-tRNA(Gln) amidotransferase subunit F, mitochondrial from Kluyveromyces lactis (strain ATCC 8585 / CBS 2359 / DSM 70799 / NBRC 1267 / NRRL Y-1140 / WM37) (Yeast).